We begin with the raw amino-acid sequence, 623 residues long: Methionine--tRNA ligase (623 aa).

The short motif at 11–21 (PYANGPRHIGH) is the 'HIGH' region element. Zn(2+) is bound by residues cysteine 143, cysteine 146, cysteine 156, and cysteine 159. Residues 347–351 (KFSSS) carry the 'KMSKS' region motif. Serine 350 lines the ATP pocket.

It belongs to the class-I aminoacyl-tRNA synthetase family. MetG type 1 subfamily. In terms of assembly, monomer. Zn(2+) is required as a cofactor.

It localises to the cytoplasm. It catalyses the reaction tRNA(Met) + L-methionine + ATP = L-methionyl-tRNA(Met) + AMP + diphosphate. Its function is as follows. Is required not only for elongation of protein synthesis but also for the initiation of all mRNA translation through initiator tRNA(fMet) aminoacylation. The polypeptide is Methionine--tRNA ligase (Bifidobacterium animalis subsp. lactis (strain AD011)).